The following is a 330-amino-acid chain: Spondin-2 (330 aa).

Positions Met-1–Gly-25 are cleaved as a signal peptide. One can recognise a Spondin domain in the interval Gly-30 to Pro-220. Cys-34 and Cys-170 are joined by a disulfide. Residue Glu-140 coordinates a divalent metal cation. Ca(2+) is bound by residues Asp-159, Asp-187, and Asp-191. Residues Asp-276–Val-330 form the TSP type-1 domain. A C-linked (Man) tryptophan glycan is attached at Trp-282.

Monomer. Interacts with integrin. As to expression, abundantly expressed in the developing hippocampus.

The protein localises to the secreted. It is found in the extracellular space. It localises to the extracellular matrix. Functionally, cell adhesion protein that promotes adhesion and outgrowth of hippocampal embryonic neurons. Binds directly to bacteria and their components and functions as an opsonin for macrophage phagocytosis of bacteria. Essential in the initiation of the innate immune response and represents a unique pattern-recognition molecule in the ECM for microbial pathogens. This Rattus norvegicus (Rat) protein is Spondin-2 (Spon2).